A 347-amino-acid polypeptide reads, in one-letter code: tRNA pseudouridine synthase D (347 aa).

Catalysis depends on aspartate 81, which acts as the Nucleophile. In terms of domain architecture, TRUD spans 158–304; it reads GVPNYFGNQR…MRHDRRAIAL (147 aa).

Belongs to the pseudouridine synthase TruD family.

It catalyses the reaction uridine(13) in tRNA = pseudouridine(13) in tRNA. Responsible for synthesis of pseudouridine from uracil-13 in transfer RNAs. This Vibrio vulnificus (strain YJ016) protein is tRNA pseudouridine synthase D.